Reading from the N-terminus, the 589-residue chain is ATP-dependent lipid A-core flippase (589 aa).

5 helical membrane passes run 23-43, 60-80, 153-173, 249-269, and 272-292; these read WPIF…DAGF, LVFI…RGAA, VGLL…FLVI, VGTS…LFFA, and PSFH…IMML. Positions 27–307 constitute an ABC transmembrane type-1 domain; that stretch reads LIGVVGMIAV…LTMVNSYIQK (281 aa). One can recognise an ABC transporter domain in the interval 339–575; sequence IEYQGVSFAY…NGAYAELYRM (237 aa). 373–380 contributes to the ATP binding site; sequence GRSGAGKS.

The protein belongs to the ABC transporter superfamily. Lipid exporter (TC 3.A.1.106) family. As to quaternary structure, homodimer.

The protein localises to the cell inner membrane. The enzyme catalyses ATP + H2O + lipid A-core oligosaccharideSide 1 = ADP + phosphate + lipid A-core oligosaccharideSide 2.. In terms of biological role, involved in lipopolysaccharide (LPS) biosynthesis. Translocates lipid A-core from the inner to the outer leaflet of the inner membrane. Transmembrane domains (TMD) form a pore in the inner membrane and the ATP-binding domain (NBD) is responsible for energy generation. This Coxiella burnetii (strain RSA 493 / Nine Mile phase I) protein is ATP-dependent lipid A-core flippase.